The primary structure comprises 87 residues: Large ribosomal subunit protein bL27 (87 aa).

The protein belongs to the bacterial ribosomal protein bL27 family.

The polypeptide is Large ribosomal subunit protein bL27 (Renibacterium salmoninarum (strain ATCC 33209 / DSM 20767 / JCM 11484 / NBRC 15589 / NCIMB 2235)).